Reading from the N-terminus, the 505-residue chain is Trans-cinnamate 4-monooxygenase (505 aa).

A helical transmembrane segment spans residues 3–23 (LILLEKSLLAVFFAVIFSIIV). (E)-cinnamate is bound by residues 213 to 218 (RSRLAQ) and A306. C447 lines the heme pocket.

This sequence belongs to the cytochrome P450 family. The cofactor is heme. In terms of tissue distribution, mostly expressed in stems, and, to a lower extent, in bulbs, roots, leaves and flowers.

It is found in the membrane. The catalysed reaction is (E)-cinnamate + reduced [NADPH--hemoprotein reductase] + O2 = (E)-4-coumarate + oxidized [NADPH--hemoprotein reductase] + H2O + H(+). Its pathway is alkaloid biosynthesis. The protein operates within phenylpropanoid metabolism; trans-4-coumarate biosynthesis; trans-4-coumarate from trans-cinnamate: step 1/1. Catalyzes the first oxidative step of the phenylpropanoid pathway in higher plants by transforming trans-cinnamate into p-coumarate. The compounds formed by this pathway are essential components for lignification, pollination, and defense against ultraviolet light, predators and pathogens. Trans-4-coumarate is a precursor to all amaryllidaceae alkaloids such as galanthamine, lycorine and haemanthamine, and including haemanthamine- and crinamine-type alkaloids, promising anticancer agents. This is Trans-cinnamate 4-monooxygenase from Narcissus pseudonarcissus (Daffodil).